The chain runs to 185 residues: Comitin (185 aa).

The Bulb-type lectin domain maps to 1 to 123; that stretch reads MELLRQGEHL…YKQILYSSKP (123 aa). The disordered stretch occupies residues 138-185; that stretch reads SGHPQSAYPPQQPGYGYPAQPGYPPQPGYPPQHGYPPQHGYPQQPGYY. Residues 141-157 are compositionally biased toward low complexity; sequence PQSAYPPQQPGYGYPAQ. Repeat copies occupy residues 153–158, 159–164, 165–170, 171–176, and 177–182. The tract at residues 153–182 is 5 X 6 AA tandem repeats of G-Y-P-X-Q-[PH]; sequence GYPAQPGYPPQPGYPPQHGYPPQHGYPQQP. Residues 158 to 171 are compositionally biased toward pro residues; sequence PGYPPQPGYPPQHG. The segment covering 172–185 has biased composition (low complexity); sequence YPPQHGYPQQPGYY.

Homodimer in solution. Post-translationally, the N-terminus is blocked.

Its subcellular location is the golgi apparatus membrane. The protein resides in the endomembrane system. The protein localises to the cytoplasm. It localises to the cytoskeleton. In terms of biological role, may have a role in cell motility. It has high affinity for both G-actin and F-actin. Binds to vesicle membranes via mannose residues and, by way of its interaction with actin, links these membranes to the cytoskeleton. This chain is Comitin (comA), found in Dictyostelium discoideum (Social amoeba).